The chain runs to 154 residues: Myoglobin (154 aa).

Positions 2–148 (GLSDGEWQLV…FRKDIAAKYK (147 aa)) constitute a Globin domain. S4 is modified (phosphoserine). H65 lines the nitrite pocket. H65 contacts O2. T68 carries the phosphothreonine modification. H94 contacts heme b.

This sequence belongs to the globin family. In terms of assembly, monomeric.

It localises to the cytoplasm. It is found in the sarcoplasm. It catalyses the reaction Fe(III)-heme b-[protein] + nitric oxide + H2O = Fe(II)-heme b-[protein] + nitrite + 2 H(+). The enzyme catalyses H2O2 + AH2 = A + 2 H2O. Its function is as follows. Monomeric heme protein which primary function is to store oxygen and facilitate its diffusion within muscle tissues. Reversibly binds oxygen through a pentacoordinated heme iron and enables its timely and efficient release as needed during periods of heightened demand. Depending on the oxidative conditions of tissues and cells, and in addition to its ability to bind oxygen, it also has a nitrite reductase activity whereby it regulates the production of bioactive nitric oxide. Under stress conditions, like hypoxia and anoxia, it also protects cells against reactive oxygen species thanks to its pseudoperoxidase activity. This Orcinus orca (Killer whale) protein is Myoglobin (MB).